The chain runs to 560 residues: Membrane protein insertase YidC (560 aa).

A helical membrane pass occupies residues 7-27 (ILIVALAIVSYVMVLKWNQDY). Positions 38–56 (ASSTTTSGLPDTATGNNAA) are enriched in polar residues. Residues 38 to 76 (ASSTTTSGLPDTATGNNAAASDDIPRAASDTSAPAETPV) form a disordered region. The next 4 membrane-spanning stretches (helical) occupy residues 367–387 (IVGNWGWSIIFLTMLIKGIFF), 437–457 (LGGCLPILVQMPVFLSLYWVL), 468–488 (FMLWITDLSIKDPFFILPIIM), and 515–535 (PIIFTFFFLWFPAGLVLYWVV).

It belongs to the OXA1/ALB3/YidC family. Type 1 subfamily. In terms of assembly, interacts with the Sec translocase complex via SecD. Specifically interacts with transmembrane segments of nascent integral membrane proteins during membrane integration.

The protein resides in the cell inner membrane. Required for the insertion and/or proper folding and/or complex formation of integral membrane proteins into the membrane. Involved in integration of membrane proteins that insert both dependently and independently of the Sec translocase complex, as well as at least some lipoproteins. Aids folding of multispanning membrane proteins. The chain is Membrane protein insertase YidC from Pseudomonas fluorescens (strain Pf0-1).